The chain runs to 354 residues: Uroporphyrinogen decarboxylase (354 aa).

Residues 27 to 31 (RQAGR), Asp-77, Tyr-154, Thr-209, and His-327 each bind substrate.

The protein belongs to the uroporphyrinogen decarboxylase family. In terms of assembly, homodimer.

Its subcellular location is the cytoplasm. The enzyme catalyses uroporphyrinogen III + 4 H(+) = coproporphyrinogen III + 4 CO2. Its pathway is porphyrin-containing compound metabolism; protoporphyrin-IX biosynthesis; coproporphyrinogen-III from 5-aminolevulinate: step 4/4. Its function is as follows. Catalyzes the decarboxylation of four acetate groups of uroporphyrinogen-III to yield coproporphyrinogen-III. The chain is Uroporphyrinogen decarboxylase from Actinobacillus succinogenes (strain ATCC 55618 / DSM 22257 / CCUG 43843 / 130Z).